The following is a 682-amino-acid chain: Histone deacetylase 18 (682 aa).

The segment at 59–382 is histone deacetylase; that stretch reads KVGLVYDETM…SLACVQVLLE (324 aa). The Proton donor/acceptor role is filled by H191. Zn(2+) contacts are provided by D231, H233, and D324. Positions 430–608 form a coiled coil; sequence SAERNSADAL…DKELQEDRSR (179 aa).

It belongs to the histone deacetylase family. HD type 2 subfamily. It depends on Zn(2+) as a cofactor. Expressed in roots, stems, young rosette leaves, flowers and siliques.

The protein localises to the nucleus. Its subcellular location is the cytoplasm. It catalyses the reaction N(6)-acetyl-L-lysyl-[histone] + H2O = L-lysyl-[histone] + acetate. In terms of biological role, responsible for the deacetylation of lysine residues on the N-terminal part of the core histones (H2A, H2B, H3 and H4). Histone deacetylation gives a tag for epigenetic repression and plays an important role in transcriptional regulation, cell cycle progression and developmental events. Histone deacetylases act via the formation of large multiprotein complexes. Required for appropriate cellular patterning in the root epidermis. Involved in the differentiation of hair and non-hair cells in the root epidermis. Is not directly involved in the regulation of the expression of pattern genes. Regulates the transcription of certain kinase genes, which are components of a positional information relay system, by changing their histone acetylation status. The polypeptide is Histone deacetylase 18 (Arabidopsis thaliana (Mouse-ear cress)).